The sequence spans 375 residues: Trichodiene synthase (375 aa).

This sequence belongs to the trichodiene synthase family.

The enzyme catalyses (2E,6E)-farnesyl diphosphate = trichodiene + diphosphate. The protein operates within sesquiterpene biosynthesis; trichothecene biosynthesis. Functionally, TS is a member of the terpene cyclase group of enzymes. It catalyzes the isomerization and cyclization of farnesyl pyro-phosphate to form trichodiene, the first cyclic intermediate in the biosynthetic pathway for trichothecenes. It serves to branch trichothecene biosynthesis from the isoprenoid pathway. The sequence is that of Trichodiene synthase (TRI5) from Fusarium mesoamericanum.